The following is an 87-amino-acid chain: Cell division topological specificity factor (87 aa).

The protein belongs to the MinE family.

Prevents the cell division inhibition by proteins MinC and MinD at internal division sites while permitting inhibition at polar sites. This ensures cell division at the proper site by restricting the formation of a division septum at the midpoint of the long axis of the cell. The chain is Cell division topological specificity factor from Delftia acidovorans (strain DSM 14801 / SPH-1).